Consider the following 433-residue polypeptide: Energy-coupling factor transporter ATP-binding protein EcfA2 (433 aa).

Residues 25–389 form the ABC transporter domain; that stretch reads VRVKNLYAVY…QHIINSTSIQ (365 aa). 62–69 contributes to the ATP binding site; it reads GNSGSGKS.

This sequence belongs to the ABC transporter superfamily. Energy-coupling factor EcfA family. In terms of assembly, forms a stable energy-coupling factor (ECF) transporter complex composed of 2 membrane-embedded substrate-binding proteins (S component), 2 ATP-binding proteins (A component) and 2 transmembrane proteins (T component).

It localises to the cell membrane. ATP-binding (A) component of a common energy-coupling factor (ECF) ABC-transporter complex. Unlike classic ABC transporters this ECF transporter provides the energy necessary to transport a number of different substrates. The sequence is that of Energy-coupling factor transporter ATP-binding protein EcfA2 from Ureaplasma parvum serovar 3 (strain ATCC 700970).